The sequence spans 146 residues: PTS system fructose-specific EIIA component (146 aa).

The PTS EIIA type-4 domain occupies 1 to 124; sequence MISVIISGHG…NLKAMSQQSF (124 aa). H9 functions as the Tele-phosphohistidine intermediate in the catalytic mechanism. H9 bears the Phosphohistidine; by HPr mark.

The protein localises to the cytoplasm. Functionally, the phosphoenolpyruvate-dependent sugar phosphotransferase system (sugar PTS), a major carbohydrate active transport system, catalyzes the phosphorylation of incoming sugar substrates concomitantly with their translocation across the cell membrane. The enzyme II LevDE PTS system is involved in fructose transport. In terms of biological role, levD and LevE act as negative regulators of the levanase operon. They may be involved in a PTS-mediated phosphorylation of a regulator. This chain is PTS system fructose-specific EIIA component, found in Bacillus subtilis (strain 168).